Consider the following 137-residue polypeptide: Basic phospholipase A2 homolog bothropstoxin-I (137 aa).

Residues 1–16 (MRTLWIMAVLLVGVEG) form the signal peptide. Disulfide bonds link Cys42–Cys131, Cys44–Cys60, Cys59–Cys111, Cys65–Cys137, Cys66–Cys104, Cys73–Cys97, and Cys91–Cys102. The interval 121 to 133 (KKYRYHLKPFCKK) is important for membrane-damaging activities in eukaryotes and bacteria; heparin-binding.

This sequence belongs to the phospholipase A2 family. Group II subfamily. K49 sub-subfamily. As to quaternary structure, homodimer; non-covalently linked (probable alternative/compact dimer conformation in solution). Binds to heparin. As to expression, expressed by the venom gland.

The protein resides in the secreted. Suramin inhibits both myotoxic and muscle-paralyzing activities. Chicoric acid inhibits myotoxic activity. Zinc ions inhibits the myotoxic activity and the neuromuscular blockade. Heparin inhibits myotoxic activity. Snake venom phospholipase A2 homolog that lacks enzymatic activity. Shows local myotoxic activity. Induces inflammation, since it induces edema and leukocytes infiltration. In addition, it induces NLRP3 NLRP3, ASC (PYCARD), caspase-1 (CASP1), and IL-1beta (IL1B) gene expression in the gastrocnemius muscle, showing that it is able to activate NLRP3 inflammasome. It also damages artificial and myoblast membranes by a calcium-independent mechanism, has bactericidal activity, and induces neuromuscular blockade. A model of myotoxic mechanism has been proposed: an apo Lys49-PLA2 is activated by the entrance of a hydrophobic molecule (e.g. fatty acid) at the hydrophobic channel of the protein leading to a reorientation of a monomer. This reorientation causes a transition between 'inactive' to 'active' states, causing alignment of C-terminal and membrane-docking sites (MDoS) side-by-side and putting the membrane-disruption sites (MDiS) in the same plane, exposed to solvent and in a symmetric position for both monomers. The MDoS region stabilizes the toxin on membrane by the interaction of charged residues with phospholipid head groups. Subsequently, the MDiS region destabilizes the membrane with penetration of hydrophobic residues. This insertion causes a disorganization of the membrane, allowing an uncontrolled influx of ions (i.e. calcium and sodium), and eventually triggering irreversible intracellular alterations and cell death. The polypeptide is Basic phospholipase A2 homolog bothropstoxin-I (Bothrops jararacussu (Jararacussu)).